A 310-amino-acid chain; its full sequence is MEIPHIPVLRNEVVDIFKDLQGLLIDCTLGFAGHSSAILSANENIRIFACDKDDEALDFSKKRVEIFKNRIKIFKSGFSNFLPFLETNEILNLSNVVGILADIGVSSLQIDNNDRGFSLKSDALDMRMDKNASLDAKFVVNHYSRSDLERIFYEFAELTNAKQIAAKIANYRADKEITSAKELATIIGTSNFKNRSISTATLAFQAIRIEVNKELDELNKLLDSIENSAIQNAKIAIITFHSLEDKIVKNRFKKWAQSCICPPFFERCECGNNHAIGKILTKKPITASADELKQNSRAKSAKLRVFEIKR.

Residues 32 to 34, aspartate 51, phenylalanine 84, aspartate 102, and glutamine 109 each bind S-adenosyl-L-methionine; that span reads AGH.

The protein belongs to the methyltransferase superfamily. RsmH family.

The protein resides in the cytoplasm. It catalyses the reaction cytidine(1402) in 16S rRNA + S-adenosyl-L-methionine = N(4)-methylcytidine(1402) in 16S rRNA + S-adenosyl-L-homocysteine + H(+). Specifically methylates the N4 position of cytidine in position 1402 (C1402) of 16S rRNA. This Campylobacter hominis (strain ATCC BAA-381 / DSM 21671 / CCUG 45161 / LMG 19568 / NCTC 13146 / CH001A) protein is Ribosomal RNA small subunit methyltransferase H.